A 320-amino-acid polypeptide reads, in one-letter code: Cytochrome f (320 aa).

An N-terminal signal peptide occupies residues 1 to 35; it reads MQTRNTFSWIREEITRSISVSLMIYIITWASISSA. Residues tyrosine 36, cysteine 56, cysteine 59, and histidine 60 each coordinate heme. A helical transmembrane segment spans residues 286–306; that stretch reads VQGLLFFLGSVVLAQIFLVLK.

Belongs to the cytochrome f family. As to quaternary structure, the 4 large subunits of the cytochrome b6-f complex are cytochrome b6, subunit IV (17 kDa polypeptide, petD), cytochrome f and the Rieske protein, while the 4 small subunits are PetG, PetL, PetM and PetN. The complex functions as a dimer. Requires heme as cofactor.

The protein resides in the plastid. Its subcellular location is the chloroplast thylakoid membrane. Component of the cytochrome b6-f complex, which mediates electron transfer between photosystem II (PSII) and photosystem I (PSI), cyclic electron flow around PSI, and state transitions. This is Cytochrome f from Lepidium virginicum (Virginia pepperweed).